The sequence spans 122 residues: U19-hexatoxin-Hi1a (122 aa).

The signal sequence occupies residues 1 to 18 (MNTMIGFIVLLVSATVLG). Residues 19-80 (DPELDALRKE…YENSNFREKR (62 aa)) constitute a propeptide that is removed on maturation. 3 cysteine pairs are disulfide-bonded: Cys81-Cys96, Cys88-Cys101, and Cys95-Cys116.

Expressed by the venom gland.

The protein resides in the secreted. Probable ion channel inhibitor. The protein is U19-hexatoxin-Hi1a of Hadronyche infensa (Fraser island funnel-web spider).